A 1026-amino-acid polypeptide reads, in one-letter code: Multidrug resistance protein MdtC (1026 aa).

Transmembrane regions (helical) follow at residues 15-35 (ILIA…LPVA), 333-353 (EVEE…FLFL), 360-380 (LIPA…MYLC), 387-407 (LSLM…IVVL), 431-451 (VGFT…PLLL), 463-483 (FAVT…TLTP), 528-548 (LVGV…IAIP), 853-873 (LILI…LYES), 897-917 (LFNA…IGIV), 953-973 (PIMM…LSGG), and 984-1004 (ITIV…TPVV).

It belongs to the resistance-nodulation-cell division (RND) (TC 2.A.6) family. MdtC subfamily. In terms of assembly, part of a tripartite efflux system composed of MdtA, MdtB and MdtC. MdtC forms a heteromultimer with MdtB.

Its subcellular location is the cell inner membrane. The polypeptide is Multidrug resistance protein MdtC (Salmonella arizonae (strain ATCC BAA-731 / CDC346-86 / RSK2980)).